The sequence spans 783 residues: FYN-binding protein 1 (783 aa).

2 stretches are compositionally biased toward polar residues: residues 1-18 and 25-45; these read MAKY…SVNS and GPNS…QGNA. The tract at residues 1-502 is disordered; the sequence is MAKYNTGGNP…KEKKEQEIKK (502 aa). Lysine 3 is subject to N6-acetyllysine. 2 positions are modified to phosphoserine: serine 28 and serine 46. Residues 69-79 show a composition bias toward basic and acidic residues; that stretch reads SSEEKPDKEPK. Position 225 is a phosphoserine (serine 225). Basic and acidic residues-rich tracts occupy residues 240–252 and 278–290; these read PARE…DHAG and NGEE…KIDA. Serine 329 is modified (phosphoserine). The segment covering 345 to 363 has biased composition (pro residues); it reads KPLPPLFTLGPPPPKPNRP. Positions 348-448 are interaction with SKAP1; sequence PPLFTLGPPP…QDGVTHSDGA (101 aa). Over residues 374 to 387 the composition is skewed to polar residues; that stretch reads TSSGNSTSKGQTSY. Residues 392 to 424 show a composition bias toward pro residues; the sequence is LPPPPPSHPASQPPLPASHPSQPPVPSLPPRNI. Acidic residues predominate over residues 451-465; sequence LDEEQDSEGETYEDI. The stretch at 456 to 507 forms a coiled coil; that stretch reads DSEGETYEDIEASKEREKKREKEEKKRLELEKKEQKEKEKKEQEIKKKFKLT. Position 457 is a phosphoserine (serine 457). The short motif at 462–465 is the SH2-binding element; that stretch reads YEDI. The segment covering 466-501 has biased composition (basic and acidic residues); it reads EASKEREKKREKEEKKRLELEKKEQKEKEKKEQEIK. Positions 469-505 match the Nuclear localization signal motif; sequence KEREKKREKEEKKRLELEKKEQKEKEKKEQEIKKKFK. The SH3 1 domain maps to 511-572; that stretch reads QVIHLAKACC…KTTAVEIDYD (62 aa). Tyrosine 571 carries the post-translational modification Phosphotyrosine. 2 positions are modified to phosphoserine: serine 573 and serine 580. The short motif at 595–598 is the SH2-binding; to LCP2 element; it reads YDDV. Residues 598–678 form a disordered region; sequence VAEQDDISSH…GTNVGKAKTE (81 aa). Composition is skewed to acidic residues over residues 620–635 and 646–656; these read PDDD…DADD and MGDEVYDDVDT. An SH2-binding; to FYN motif is present at residues 625-628; the sequence is YDGI. At tyrosine 651 the chain carries Phosphotyrosine. The short motif at 674–700 is the Nuclear localization signal element; sequence KAKTEEKDLKKLKKQEKEEKDFRKKFK. The region spanning 700–768 is the SH3 2 domain; the sequence is KYDGEIRVLY…LRSYLADNDG (69 aa).

As to quaternary structure, part of a complex consisting of SKAP2, FYB1 and PTPNS1. Part of a complex consisting of SKAP2, FYB1 and LILRB3. Part of a complex consisting of SKAP1, FYB1 and CLNK. Interacts with CLNK (via its SH2 domain); this interaction allows SKAP1 and FYB1 to recruit FYN to the complex, thus promoting the phosphorylation of CLNK by FYN. Interacts with FYN. Interacts with LCP2. Interacts with SKAP1. Interacts with SKAP2. Interacts with FASLG. Interacts with EVL. Interacts with TMEM47. Interacts with LCK. Post-translationally, T-cell receptor ligation leads to increased tyrosine phosphorylation. In terms of tissue distribution, expressed in hematopoietic tissues such as myeloid and T-cells, spleen and thymus. Not expressed in B-cells, nor in non-lymphoid tissues.

The protein resides in the cytoplasm. It localises to the nucleus. Its subcellular location is the cell junction. Its function is as follows. Acts as an adapter protein of the FYN and LCP2 signaling cascades in T-cells. May play a role in linking T-cell signaling to remodeling of the actin cytoskeleton. Modulates the expression of IL2. Involved in platelet activation. Prevents the degradation of SKAP1 and SKAP2. May be involved in high affinity immunoglobulin epsilon receptor signaling in mast cells. This chain is FYN-binding protein 1, found in Homo sapiens (Human).